The chain runs to 216 residues: 3-isopropylmalate dehydratase small subunit 1 (216 aa).

This sequence belongs to the LeuD family. LeuD type 1 subfamily. In terms of assembly, heterodimer of LeuC and LeuD.

The catalysed reaction is (2R,3S)-3-isopropylmalate = (2S)-2-isopropylmalate. Its pathway is amino-acid biosynthesis; L-leucine biosynthesis; L-leucine from 3-methyl-2-oxobutanoate: step 2/4. Functionally, catalyzes the isomerization between 2-isopropylmalate and 3-isopropylmalate, via the formation of 2-isopropylmaleate. This is 3-isopropylmalate dehydratase small subunit 1 from Bordetella bronchiseptica (strain ATCC BAA-588 / NCTC 13252 / RB50) (Alcaligenes bronchisepticus).